The following is a 457-amino-acid chain: Bifunctional protein GlmU (457 aa).

The interval 1-232 (MAKVAAIVLA…PMEVMGVNDR (232 aa)) is pyrophosphorylase. Residues 9–12 (LAAG), K23, Q75, and 80–81 (GT) each bind UDP-N-acetyl-alpha-D-glucosamine. Position 105 (D105) interacts with Mg(2+). The UDP-N-acetyl-alpha-D-glucosamine site is built by G142, E157, N172, and N230. Residue N230 participates in Mg(2+) binding. The tract at residues 233–253 (VQLAEAGRIIRVRINKALMVA) is linker. The N-acetyltransferase stretch occupies residues 254–457 (GTTIIDPETT…NKEGWKLKNK (204 aa)). UDP-N-acetyl-alpha-D-glucosamine contacts are provided by R336 and K354. H366 serves as the catalytic Proton acceptor. UDP-N-acetyl-alpha-D-glucosamine-binding residues include Y369 and N380. Residues 389 to 390 (NY), S408, A426, and R443 contribute to the acetyl-CoA site.

The protein in the N-terminal section; belongs to the N-acetylglucosamine-1-phosphate uridyltransferase family. This sequence in the C-terminal section; belongs to the transferase hexapeptide repeat family. As to quaternary structure, homotrimer. The cofactor is Mg(2+).

The protein resides in the cytoplasm. It carries out the reaction alpha-D-glucosamine 1-phosphate + acetyl-CoA = N-acetyl-alpha-D-glucosamine 1-phosphate + CoA + H(+). The catalysed reaction is N-acetyl-alpha-D-glucosamine 1-phosphate + UTP + H(+) = UDP-N-acetyl-alpha-D-glucosamine + diphosphate. Its pathway is nucleotide-sugar biosynthesis; UDP-N-acetyl-alpha-D-glucosamine biosynthesis; N-acetyl-alpha-D-glucosamine 1-phosphate from alpha-D-glucosamine 6-phosphate (route II): step 2/2. The protein operates within nucleotide-sugar biosynthesis; UDP-N-acetyl-alpha-D-glucosamine biosynthesis; UDP-N-acetyl-alpha-D-glucosamine from N-acetyl-alpha-D-glucosamine 1-phosphate: step 1/1. It participates in bacterial outer membrane biogenesis; LPS lipid A biosynthesis. Catalyzes the last two sequential reactions in the de novo biosynthetic pathway for UDP-N-acetylglucosamine (UDP-GlcNAc). The C-terminal domain catalyzes the transfer of acetyl group from acetyl coenzyme A to glucosamine-1-phosphate (GlcN-1-P) to produce N-acetylglucosamine-1-phosphate (GlcNAc-1-P), which is converted into UDP-GlcNAc by the transfer of uridine 5-monophosphate (from uridine 5-triphosphate), a reaction catalyzed by the N-terminal domain. This is Bifunctional protein GlmU from Geotalea daltonii (strain DSM 22248 / JCM 15807 / FRC-32) (Geobacter daltonii).